Consider the following 198-residue polypeptide: Imidazoleglycerol-phosphate dehydratase (198 aa).

It belongs to the imidazoleglycerol-phosphate dehydratase family.

It is found in the cytoplasm. It catalyses the reaction D-erythro-1-(imidazol-4-yl)glycerol 3-phosphate = 3-(imidazol-4-yl)-2-oxopropyl phosphate + H2O. The protein operates within amino-acid biosynthesis; L-histidine biosynthesis; L-histidine from 5-phospho-alpha-D-ribose 1-diphosphate: step 6/9. The chain is Imidazoleglycerol-phosphate dehydratase from Streptomyces griseus subsp. griseus (strain JCM 4626 / CBS 651.72 / NBRC 13350 / KCC S-0626 / ISP 5235).